Reading from the N-terminus, the 70-residue chain is Bowman-Birk type proteinase inhibitor A7 (70 aa).

Cystine bridges form between Cys12–Cys31, Cys18–Cys29, Cys38–Cys45, and Cys42–Cys59.

Belongs to the Bowman-Birk serine protease inhibitor family. As to expression, expressed in bulb (at protein level).

Serine protease inhibitor. Strongly inhibits trypsin (Ki = 7.1 nM) and almost completely inhibits elastase. Also inhibits chymotrypsin (Ki = 19 nM). Does not inhibit bacterial subtilisin. The polypeptide is Bowman-Birk type proteinase inhibitor A7 (Hyacinthus orientalis (Common hyacinth)).